Here is a 333-residue protein sequence, read N- to C-terminus: NADH-quinone oxidoreductase subunit H (333 aa).

A run of 8 helical transmembrane segments spans residues 15-35, 88-108, 117-137, 159-179, 191-211, 239-259, 274-296, and 313-333; these read FFIF…FVTY, FILA…VIPF, IGVG…GVVT, ISYE…AGSL, VWYI…AVAE, WAFF…LITV, IPGA…WFRV, and VLLP…ELFF.

The protein belongs to the complex I subunit 1 family. NDH-1 is composed of 14 different subunits. Subunits NuoA, H, J, K, L, M, N constitute the membrane sector of the complex.

The protein localises to the cell membrane. The enzyme catalyses a quinone + NADH + 5 H(+)(in) = a quinol + NAD(+) + 4 H(+)(out). Its function is as follows. NDH-1 shuttles electrons from NADH, via FMN and iron-sulfur (Fe-S) centers, to quinones in the respiratory chain. The immediate electron acceptor for the enzyme in this species is believed to be ubiquinone. Couples the redox reaction to proton translocation (for every two electrons transferred, four hydrogen ions are translocated across the cytoplasmic membrane), and thus conserves the redox energy in a proton gradient. This subunit may bind ubiquinone. This chain is NADH-quinone oxidoreductase subunit H, found in Bacillus anthracis (strain A0248).